The following is a 204-amino-acid chain: Small ribosomal subunit protein uS4c (204 aa).

The S4 RNA-binding domain occupies 90-150; that stretch reads MRLDNILYRL…GKKTDQLKTI (61 aa).

Belongs to the universal ribosomal protein uS4 family. As to quaternary structure, part of the 30S ribosomal subunit. Contacts protein S5. The interaction surface between S4 and S5 is involved in control of translational fidelity.

It is found in the plastid. Its subcellular location is the chloroplast. Its function is as follows. One of the primary rRNA binding proteins, it binds directly to 16S rRNA where it nucleates assembly of the body of the 30S subunit. Functionally, with S5 and S12 plays an important role in translational accuracy. This Gnetum parvifolium (Small-leaved jointfir) protein is Small ribosomal subunit protein uS4c (rps4).